A 159-amino-acid chain; its full sequence is U1 small nuclear ribonucleoprotein C (159 aa).

The segment at 4-36 (FYCDYCDTYLTHDSPSVRKTHCSGRKHKENVKD) adopts a Matrin-type zinc-finger fold. Phosphotyrosine is present on Y8. Residue S17 is modified to Phosphoserine. At K52 the chain carries N6-acetyllysine. The interval 62–96 (IPPAPFSAPPPAGAMIPPPPSLPGPPRPGMMPAPH) is disordered. The span at 63-92 (PPAPFSAPPPAGAMIPPPPSLPGPPRPGMM) shows a compositional bias: pro residues.

It belongs to the U1 small nuclear ribonucleoprotein C family. In terms of assembly, component of the U1 snRNP. The U1 snRNP is composed of the U1 snRNA and the 7 core Sm proteins SNRPB, SNRPD1, SNRPD2, SNRPD3, SNRPE, SNRPF and SNRPG that assemble in a heptameric protein ring on the Sm site of the small nuclear RNA to form the core snRNP, and at least 3 U1 snRNP-specific proteins SNRNP70/U1-70K, SNRPA/U1-A and SNRPC/U1-C. SNRPC/U1-C interacts with U1 snRNA and the 5' splice-site region of the pre-mRNA. Interacts (via N-terminus) with TIA1 (via C-terminus); thereby promoting spliceosomal U1 snRNP recruitment to 5' splice sites.

It is found in the nucleus. Component of the spliceosomal U1 snRNP, which is essential for recognition of the pre-mRNA 5' splice-site and the subsequent assembly of the spliceosome. SNRPC/U1-C is directly involved in initial 5' splice-site recognition for both constitutive and regulated alternative splicing. The interaction with the 5' splice-site seems to precede base-pairing between the pre-mRNA and the U1 snRNA. Stimulates commitment or early (E) complex formation by stabilizing the base pairing of the 5' end of the U1 snRNA and the 5' splice-site region. In Rattus norvegicus (Rat), this protein is U1 small nuclear ribonucleoprotein C.